Reading from the N-terminus, the 341-residue chain is HTH-type transcriptional repressor PurR (341 aa).

Residues 2-56 (ATIKDVAKRAGVSTTTVSHVINKTRFVADETKAAVWEAIKELHYSPSAVARSLKV) enclose the HTH lacI-type domain. Positions 4 to 23 (IKDVAKRAGVSTTTVSHVIN) form a DNA-binding region, H-T-H motif. Residues 48-56 (SAVARSLKV) mediate DNA binding. Hypoxanthine-binding residues include Tyr73, Arg190, Thr192, Phe221, and Asp275.

Homodimer.

The protein operates within purine metabolism; purine nucleotide biosynthesis [regulation]. Its function is as follows. Is the main repressor of the genes involved in the de novo synthesis of purine nucleotides, regulating purB, purC, purEK, purF, purHD, purL, purMN and guaBA expression. PurR is allosterically activated to bind its cognate DNA by binding the purine corepressors, hypoxanthine or guanine, thereby effecting transcription repression. In Edwardsiella ictaluri (strain 93-146), this protein is HTH-type transcriptional repressor PurR.